The chain runs to 501 residues: Chromosomal replication initiator protein DnaA (501 aa).

The segment at 1–90 (MSVELWQQCV…KRSSAPRAAP (90 aa)) is domain I, interacts with DnaA modulators. Residues 91 to 164 (NAPLAAAASQ…QVEGALKHTS (74 aa)) are domain II. A compositionally biased stretch (low complexity) spans 103-121 (AAPVASTPAPAPSKSSAKK). Positions 103–150 (AAPVASTPAPAPSKSSAKKNAAENEEPSRDSFDPMAGASSQQAPIRAE) are disordered. Positions 122-134 (NAAENEEPSRDSF) are enriched in basic and acidic residues. The interval 165–381 (YLNRTFTFEN…GALKRVIAHS (217 aa)) is domain III, AAA+ region. Residues G209, G211, K212, and T213 each coordinate ATP. The interval 382 to 501 (HFMGRDITIE…YKNLLRTLTT (120 aa)) is domain IV, binds dsDNA.

The protein belongs to the DnaA family. In terms of assembly, oligomerizes as a right-handed, spiral filament on DNA at oriC.

It localises to the cytoplasm. Its function is as follows. Plays an essential role in the initiation and regulation of chromosomal replication. ATP-DnaA binds to the origin of replication (oriC) to initiate formation of the DNA replication initiation complex once per cell cycle. Binds the DnaA box (a 9 base pair repeat at the origin) and separates the double-stranded (ds)DNA. Forms a right-handed helical filament on oriC DNA; dsDNA binds to the exterior of the filament while single-stranded (ss)DNA is stabiized in the filament's interior. The ATP-DnaA-oriC complex binds and stabilizes one strand of the AT-rich DNA unwinding element (DUE), permitting loading of DNA polymerase. After initiation quickly degrades to an ADP-DnaA complex that is not apt for DNA replication. Binds acidic phospholipids. The polypeptide is Chromosomal replication initiator protein DnaA (Pseudomonas fluorescens (strain SBW25)).